We begin with the raw amino-acid sequence, 262 residues long: Putative hydroxypyruvate isomerase (262 aa).

Residues E146 and E244 each act as proton donor/acceptor in the active site.

The protein belongs to the hyi family.

The catalysed reaction is 3-hydroxypyruvate = 2-hydroxy-3-oxopropanoate. Catalyzes the reversible isomerization between hydroxypyruvate and 2-hydroxy-3-oxopropanoate (also termed tartronate semialdehyde). The sequence is that of Putative hydroxypyruvate isomerase from Caenorhabditis elegans.